We begin with the raw amino-acid sequence, 83 residues long: uncharacterized protein (83 aa).

A helical transmembrane segment spans residues 50 to 70; that stretch reads IMVFLGEAWIILIPFAIFCII.

Belongs to the plectrovirus ORF7 family.

It is found in the host membrane. This is an uncharacterized protein from Spiroplasma melliferum (SpV1).